Consider the following 69-residue polypeptide: Putative membrane protein insertion efficiency factor (69 aa).

The protein belongs to the UPF0161 family.

It is found in the cell membrane. In terms of biological role, could be involved in insertion of integral membrane proteins into the membrane. In Alkaliphilus metalliredigens (strain QYMF), this protein is Putative membrane protein insertion efficiency factor.